The chain runs to 90 residues: uncharacterized protein (90 aa).

A disordered region spans residues 53–90; it reads WRARPDANDADTTSSSSSSETCTESDDSSDVPPARYAV. The span at 63-74 shows a compositional bias: low complexity; it reads DTTSSSSSSETC.

This is an uncharacterized protein from Orgyia pseudotsugata (Douglas-fir tussock moth).